A 385-amino-acid chain; its full sequence is Spindle pole component BBP1 (385 aa).

Serine 29 is subject to Phosphoserine. Basic and acidic residues predominate over residues 34–48 (YKDQEERRDRSRYAQ). Positions 34 to 76 (YKDQEERRDRSRYAQDDTNFSMKFGNDSNRRSTNLSRSNSWSG) are disordered. The segment covering 64–75 (RSTNLSRSNSWS) has biased composition (low complexity). Serine 73 and serine 115 each carry phosphoserine. Positions 229 to 355 (QMDLNSRDLE…KDMQRDNYES (127 aa)) form a coiled coil.

The protein belongs to the BBP1 family. Homodimer. Interacts with KAR1, MPS2 and SPC29.

It localises to the cytoplasm. It is found in the cytoskeleton. Its subcellular location is the microtubule organizing center. The protein localises to the spindle pole body. Functionally, component of the spindle pole body (SPB) required for insertion of the nascent SPB into the nuclear envelope and for the proper execution of spindle pole body (SPB) duplication. Connects the central plaque of the SPB with the half-bridge. Required for proper localization of CDC5 at the SPB and for proper M-phase progression. This chain is Spindle pole component BBP1 (BBP1), found in Saccharomyces cerevisiae (strain ATCC 204508 / S288c) (Baker's yeast).